Reading from the N-terminus, the 785-residue chain is Phenylalanine--tRNA ligase beta subunit (785 aa).

Positions 38-150 (CEHLKTFVIA…NTYNVGDTFF (113 aa)) constitute a tRNA-binding domain. The 77-residue stretch at 394–470 (VDNIELNFFP…RLYGYDKICE (77 aa)) folds into the B5 domain. 4 residues coordinate Mg(2+): Asp-448, Asp-454, Glu-457, and Glu-458. Positions 690–783 (SCYQSVKRDF…VAEKLGGVLR (94 aa)) constitute an FDX-ACB domain.

This sequence belongs to the phenylalanyl-tRNA synthetase beta subunit family. Type 1 subfamily. In terms of assembly, tetramer of two alpha and two beta subunits. Requires Mg(2+) as cofactor.

It is found in the cytoplasm. The enzyme catalyses tRNA(Phe) + L-phenylalanine + ATP = L-phenylalanyl-tRNA(Phe) + AMP + diphosphate + H(+). This is Phenylalanine--tRNA ligase beta subunit from Ehrlichia canis (strain Jake).